A 201-amino-acid chain; its full sequence is uncharacterized protein (201 aa).

The disordered stretch occupies residues 1-22 (MAASKAAKSSEDRAGGGGGGGG).

This is an uncharacterized protein from Tomato ringspot virus (isolate raspberry) (ToRSV).